Here is a 129-residue protein sequence, read N- to C-terminus: NADH-quinone oxidoreductase subunit A (129 aa).

Helical transmembrane passes span 9-29 (FPIGVVLLVAVVLAFTMLGLA), 68-88 (LLFIVFDIEAIFLYPWAVLLL), and 97-117 (LGWPGFVSMGIFVFTLVAGLV).

This sequence belongs to the complex I subunit 3 family. NDH-1 is composed of 14 different subunits. Subunits NuoA, H, J, K, L, M, N constitute the membrane sector of the complex.

The protein localises to the cell inner membrane. It catalyses the reaction a quinone + NADH + 5 H(+)(in) = a quinol + NAD(+) + 4 H(+)(out). Functionally, NDH-1 shuttles electrons from NADH, via FMN and iron-sulfur (Fe-S) centers, to quinones in the respiratory chain. The immediate electron acceptor for the enzyme in this species is believed to be ubiquinone. Couples the redox reaction to proton translocation (for every two electrons transferred, four hydrogen ions are translocated across the cytoplasmic membrane), and thus conserves the redox energy in a proton gradient. The polypeptide is NADH-quinone oxidoreductase subunit A (Anaeromyxobacter sp. (strain K)).